A 61-amino-acid chain; its full sequence is 2S seed storage albumin protein (61 aa).

It belongs to the 2S seed storage albumins family. As to quaternary structure, the mature protein consists of a small and a large chain linked by 2 disulfide bonds.

This is a 2S seed storage protein. Inhibits cell-free protein synthesis. The chain is 2S seed storage albumin protein from Cucurbita moschata (Winter crookneck squash).